Reading from the N-terminus, the 140-residue chain is Early nodulin-like protein 22 (140 aa).

Residues 1–28 form the signal peptide; the sequence is MAQSSGHVSYVAVTVPIAIVMTVLCLFL. Residues 39–138 enclose the Phytocyanin domain; sequence TTYIVGGDDG…GLKMAIKALA (100 aa). The N-linked (GlcNAc...) asparagine glycan is linked to Asn85. Cysteines 92 and 126 form a disulfide.

This sequence belongs to the early nodulin-like (ENODL) family.

Functionally, may act as a carbohydrate transporter. The polypeptide is Early nodulin-like protein 22 (Arabidopsis thaliana (Mouse-ear cress)).